A 412-amino-acid polypeptide reads, in one-letter code: Argininosuccinate synthase (412 aa).

ATP is bound by residues 10 to 18 (AYSGGLDTS) and Ala-36. Residues Tyr-87 and Ser-92 each contribute to the L-citrulline site. A Phosphotyrosine modification is found at Tyr-87. Lys-112 is modified (N6-acetyllysine). At Tyr-113 the chain carries Phosphotyrosine. 115-123 (SHGATGKGN) contacts ATP. L-aspartate contacts are provided by Thr-119, Asn-123, and Asp-124. Residue Asn-123 participates in L-citrulline binding. Position 127 (Arg-127) interacts with L-citrulline. 2 positions are modified to N6-acetyllysine; by CLOCK: Lys-165 and Lys-176. Positions 180 and 189 each coordinate L-citrulline. Ser-180 carries the post-translational modification Phosphoserine. Thr-219 carries the post-translational modification Phosphothreonine. Glu-270 and Tyr-282 together coordinate L-citrulline.

The protein belongs to the argininosuccinate synthase family. Type 1 subfamily. In terms of assembly, homotetramer. Interacts with NMRAL1. Interacts with CLOCK; in a circadian manner. Forms tissue-specific complexes with ASL, SLC7A1, HSP90AA1 and nitric oxide synthase NOS1, NOS2 or NOS3; the complex regulates cell-autonomous L-arginine synthesis and citrulline recycling while channeling extracellular L-arginine to nitric oxide synthesis pathway. In terms of processing, acetylated by CLOCK in a circadian manner which negatively regulates its enzyme activity. Deacetylated by histone deacetylases. As to expression, expressed in adult liver.

The protein localises to the cytoplasm. The protein resides in the cytosol. It catalyses the reaction L-citrulline + L-aspartate + ATP = 2-(N(omega)-L-arginino)succinate + AMP + diphosphate + H(+). The protein operates within amino-acid biosynthesis; L-arginine biosynthesis; L-arginine from L-ornithine and carbamoyl phosphate: step 2/3. Its pathway is nitrogen metabolism; urea cycle; (N(omega)-L-arginino)succinate from L-aspartate and L-citrulline: step 1/1. One of the enzymes of the urea cycle, the metabolic pathway transforming neurotoxic amonia produced by protein catabolism into inocuous urea in the liver of ureotelic animals. Catalyzes the formation of arginosuccinate from aspartate, citrulline and ATP and together with ASL it is responsible for the biosynthesis of arginine in most body tissues. The chain is Argininosuccinate synthase from Homo sapiens (Human).